The primary structure comprises 248 residues: MNVLPCSINTLKGLYEISGVEVGQHFYWQIGGFQVHAQVLITSWVVIAILLGSAAIAVRNPQTIPTDGQNFFEYVLEFIRDVSKTQIGEEEYGPWVPFIGTLFLFIFVSNWSGALLPWRIIQLPHGELAAPTNDINTTVALALLTSVAYFYAGLTKKGLGYFGKYIQPTPILLPINVLEDFTKPLSLSFRLFGNILADELVVVVLVSLVPLVIPIPVMFLGLFTSGIQALIFATLAAAYIGESMEGHH.

The next 5 membrane-spanning stretches (helical) occupy residues 38–58 (QVLI…AIAV), 96–116 (VPFI…GALL), 135–155 (INTT…AGLT), 200–220 (LVVV…VMFL), and 221–241 (GLFT…AYIG).

Belongs to the ATPase A chain family. As to quaternary structure, F-type ATPases have 2 components, CF(1) - the catalytic core - and CF(0) - the membrane proton channel. CF(1) has five subunits: alpha(3), beta(3), gamma(1), delta(1), epsilon(1). CF(0) has four main subunits: a, b, b' and c.

The protein localises to the plastid. It is found in the chloroplast thylakoid membrane. Its function is as follows. Key component of the proton channel; it plays a direct role in the translocation of protons across the membrane. This Nuphar advena (Common spatterdock) protein is ATP synthase subunit a, chloroplastic.